The sequence spans 436 residues: UPF0597 protein YhaM (436 aa).

It belongs to the UPF0597 family.

The sequence is that of UPF0597 protein YhaM from Escherichia coli O127:H6 (strain E2348/69 / EPEC).